The following is a 415-amino-acid chain: Multidrug resistance protein MdtA (415 aa).

A signal peptide spans 1 to 21 (MKGSYKSRWVIVIVVVIAAIA). The segment covering 31 to 46 (DSQSAAPGATKQAQQS) has biased composition (polar residues). Disordered regions lie at residues 31-56 (DSQSAAPGATKQAQQSPAGGRRGMRA) and 391-415 (VEAQSTTTPEEKATSREYAKKGARS). Residues 399–415 (PEEKATSREYAKKGARS) are compositionally biased toward basic and acidic residues.

Belongs to the membrane fusion protein (MFP) (TC 8.A.1) family. In terms of assembly, part of a tripartite efflux system composed of MdtA, MdtB and MdtC.

The protein localises to the cell inner membrane. The MdtABC tripartite complex confers resistance against novobiocin and deoxycholate. In Escherichia coli O45:K1 (strain S88 / ExPEC), this protein is Multidrug resistance protein MdtA.